The sequence spans 142 residues: Type IV pilus subunit protein TapA (142 aa).

A propeptide spans 1 to 6 (MKKQSG) (leader sequence). F7 bears the N-methylphenylalanine mark. A helical membrane pass occupies residues 7-27 (FTLIELMIVVAIVAILAAIAL).

Belongs to the N-Me-Phe pilin family.

Its subcellular location is the membrane. Its function is as follows. Major component of the type IV (TAP) pilus. Aeromonas hydrophila possesses two distinct families of type IV pili: the bundle-forming pilus (Bfp) and the type IV pilus (Tap). The protein is Type IV pilus subunit protein TapA (tapA) of Aeromonas hydrophila.